The following is a 144-amino-acid chain: Actin-associated protein FAM107A (144 aa).

A coiled-coil region spans residues 70–90; it reads VLEHRRRNQLIKKKEEELEAK. The Nuclear localization signal signature appears at 74 to 84; the sequence is RRRNQLIKKKE. Residues 104-123 are disordered; the sequence is QQRLNQLENPPQRDEDHAPE. Residues 114–123 are compositionally biased toward basic and acidic residues; sequence PQRDEDHAPE.

Interacts with ACTB. Interacts with F-actin. Interacts with PRDX1. Interacts with COMMD1; this interaction stabilizes COMMD1 in the nucleus. Interacts with MAP1A. Expressed in septum, the neocortex, the CA3 region of the hippocampus and the cerebellum (at protein level).

It localises to the nucleus. It is found in the cytoplasm. The protein resides in the cytoskeleton. The protein localises to the stress fiber. Its subcellular location is the cell junction. It localises to the focal adhesion. It is found in the cell projection. The protein resides in the ruffle membrane. The protein localises to the synapse. In terms of biological role, stress-inducible actin-binding protein that plays a role in synaptic and cognitive functions by modulating actin filamentous (F-actin) dynamics. Mediates polymerization of globular actin to F-actin. Also binds to, stabilizes and bundles F-actin. Involved in synaptic function by regulating neurite outgrowth in an actin-dependent manner and for the acquisition of hippocampus-dependent cognitive function, such as learning and long-term memory. Plays a role in the actin and microtubule cytoskeleton organization; negatively regulates focal adhesion (FA) assembly promoting malignant glial cell migration in an actin-, microtubule- and MAP1A-dependent manner. Also involved in neuroblastoma G1/S phase cell cycle progression and cell proliferation inhibition by stimulating ubiquitination of NF-kappa-B subunit RELA and NF-kappa-B degradation in a COMMD1- and actin-dependent manner. May play a role in tumor development. In Mus musculus (Mouse), this protein is Actin-associated protein FAM107A.